The primary structure comprises 122 residues: Small ribosomal subunit protein uS13 (122 aa).

The tract at residues 97–122 (PVRGQRTHTNARTRKGPAKAIAGKKK) is disordered.

Belongs to the universal ribosomal protein uS13 family. As to quaternary structure, part of the 30S ribosomal subunit. Forms a loose heterodimer with protein S19. Forms two bridges to the 50S subunit in the 70S ribosome.

Functionally, located at the top of the head of the 30S subunit, it contacts several helices of the 16S rRNA. In the 70S ribosome it contacts the 23S rRNA (bridge B1a) and protein L5 of the 50S subunit (bridge B1b), connecting the 2 subunits; these bridges are implicated in subunit movement. Contacts the tRNAs in the A and P-sites. The chain is Small ribosomal subunit protein uS13 from Bartonella quintana (strain Toulouse) (Rochalimaea quintana).